The primary structure comprises 201 residues: FMN-dependent NADH:quinone oxidoreductase (201 aa).

FMN is bound by residues serine 10, 16-18, 96-99, and 140-143; these read SQS, MYNF, and SRGG.

Belongs to the azoreductase type 1 family. In terms of assembly, homodimer. It depends on FMN as a cofactor.

It catalyses the reaction 2 a quinone + NADH + H(+) = 2 a 1,4-benzosemiquinone + NAD(+). The catalysed reaction is N,N-dimethyl-1,4-phenylenediamine + anthranilate + 2 NAD(+) = 2-(4-dimethylaminophenyl)diazenylbenzoate + 2 NADH + 2 H(+). In terms of biological role, quinone reductase that provides resistance to thiol-specific stress caused by electrophilic quinones. Functionally, also exhibits azoreductase activity. Catalyzes the reductive cleavage of the azo bond in aromatic azo compounds to the corresponding amines. In Salmonella arizonae (strain ATCC BAA-731 / CDC346-86 / RSK2980), this protein is FMN-dependent NADH:quinone oxidoreductase.